The primary structure comprises 124 residues: Small ribosomal subunit protein uS11 (124 aa).

The protein belongs to the universal ribosomal protein uS11 family. As to quaternary structure, part of the 30S ribosomal subunit. Interacts with proteins S7 and S18. Binds to IF-3.

Located on the platform of the 30S subunit, it bridges several disparate RNA helices of the 16S rRNA. Forms part of the Shine-Dalgarno cleft in the 70S ribosome. The sequence is that of Small ribosomal subunit protein uS11 from Sulfurovum sp. (strain NBC37-1).